We begin with the raw amino-acid sequence, 537 residues long: Interleukin-2 receptor subunit beta (537 aa).

Positions 1 to 26 (MATVDLSWRLPLYILLLLLATTWVSA) are cleaved as a signal peptide. Topologically, residues 27–239 (AVNDCSHLKC…FRTRPADPKE (213 aa)) are extracellular. Cys36 and Cys46 are disulfide-bonded. 3 N-linked (GlcNAc...) asparagine glycosylation sites follow: Asn43, Asn55, and Asn71. Cys74 and Cys86 are joined by a disulfide. Positions 135 to 235 (APHSLQVLHI…QPMAFRTRPA (101 aa)) constitute a Fibronectin type-III domain. Asn150 carries N-linked (GlcNAc...) asparagine glycosylation. Residues 221-225 (WSPWS) carry the WSXWS motif motif. Residues 240–267 (IFPLPWLRCLLLVLGCFFGFLSCVCVLV) traverse the membrane as a helical segment. At 268–537 (KCRYLGPWLK…LQAQDSAHLI (270 aa)) the chain is on the cytoplasmic side. The Box 1 motif motif lies at 280–288 (LKCHIPDPS). Disordered regions lie at residues 442–466 (AYGNSITPEERPPLSLQEGLPSLAS) and 479–498 (ELGDDGEGMSTNSSGQQASV). Residues 487–497 (MSTNSSGQQAS) are compositionally biased toward polar residues.

Belongs to the type I cytokine receptor family. Type 4 subfamily. Non-covalent dimer of an alpha and a beta subunit. IL2R exists in 3 different forms: a high affinity dimer, an intermediate affinity monomer (beta subunit), and a low affinity monomer (alpha subunit). The high and intermediate affinity forms also associate with a gamma subunit. Interacts with SHB upon interleukin stimulation.

It localises to the cell membrane. The protein localises to the cell surface. Its function is as follows. Receptor for interleukin-2. This beta subunit is involved in receptor mediated endocytosis and transduces the mitogenic signals of IL2. Probably in association with IL15RA, involved in the stimulation of neutrophil phagocytosis by IL15. This Rattus norvegicus (Rat) protein is Interleukin-2 receptor subunit beta (Il2rb).